Consider the following 355-residue polypeptide: NADH-quinone oxidoreductase subunit H (355 aa).

8 helical membrane-spanning segments follow: residues 25–45 (IVRILVVAVVILLCVAYLILW), 91–111 (WLYLIAPVMTVVPAFAVWAVI), 126–146 (LLYAMAISSIGVYAVILAGWA), 170–190 (MGFALVLVLMTAGSLNLSEIV), 205–225 (FLSWNWLPLLPAFVVYFVSGI), 253–273 (MAFALFFLAEYINMIVISALA), 290–310 (FIPGVFWLVLKVFALLSVFIW), and 330–350 (VFLPVTVIWVVVVGFWMMSPL).

The protein belongs to the complex I subunit 1 family. As to quaternary structure, NDH-1 is composed of 14 different subunits. Subunits NuoA, H, J, K, L, M, N constitute the membrane sector of the complex.

It localises to the cell inner membrane. The enzyme catalyses a quinone + NADH + 5 H(+)(in) = a quinol + NAD(+) + 4 H(+)(out). Functionally, NDH-1 shuttles electrons from NADH, via FMN and iron-sulfur (Fe-S) centers, to quinones in the respiratory chain. The immediate electron acceptor for the enzyme in this species is believed to be ubiquinone. Couples the redox reaction to proton translocation (for every two electrons transferred, four hydrogen ions are translocated across the cytoplasmic membrane), and thus conserves the redox energy in a proton gradient. This subunit may bind ubiquinone. The protein is NADH-quinone oxidoreductase subunit H of Burkholderia ambifaria (strain MC40-6).